The following is a 98-amino-acid chain: Large ribosomal subunit protein uL23 (98 aa).

It belongs to the universal ribosomal protein uL23 family. Part of the 50S ribosomal subunit. Contacts protein L29, and trigger factor when it is bound to the ribosome.

Functionally, one of the early assembly proteins it binds 23S rRNA. One of the proteins that surrounds the polypeptide exit tunnel on the outside of the ribosome. Forms the main docking site for trigger factor binding to the ribosome. The protein is Large ribosomal subunit protein uL23 of Streptococcus equi subsp. equi (strain 4047).